The sequence spans 423 residues: Gamma-glutamyl phosphate reductase (423 aa).

Belongs to the gamma-glutamyl phosphate reductase family.

The protein resides in the cytoplasm. It carries out the reaction L-glutamate 5-semialdehyde + phosphate + NADP(+) = L-glutamyl 5-phosphate + NADPH + H(+). It participates in amino-acid biosynthesis; L-proline biosynthesis; L-glutamate 5-semialdehyde from L-glutamate: step 2/2. In terms of biological role, catalyzes the NADPH-dependent reduction of L-glutamate 5-phosphate into L-glutamate 5-semialdehyde and phosphate. The product spontaneously undergoes cyclization to form 1-pyrroline-5-carboxylate. This chain is Gamma-glutamyl phosphate reductase, found in Roseiflexus castenholzii (strain DSM 13941 / HLO8).